The chain runs to 545 residues: ATP synthase subunit alpha (545 aa).

173–180 (GDRQTGKT) is a binding site for ATP.

This sequence belongs to the ATPase alpha/beta chains family. As to quaternary structure, F-type ATPases have 2 components, CF(1) - the catalytic core - and CF(0) - the membrane proton channel. CF(1) has five subunits: alpha(3), beta(3), gamma(1), delta(1), epsilon(1). CF(0) has three main subunits: a(1), b(2) and c(9-12). The alpha and beta chains form an alternating ring which encloses part of the gamma chain. CF(1) is attached to CF(0) by a central stalk formed by the gamma and epsilon chains, while a peripheral stalk is formed by the delta and b chains.

The protein localises to the cell membrane. The enzyme catalyses ATP + H2O + 4 H(+)(in) = ADP + phosphate + 5 H(+)(out). Functionally, produces ATP from ADP in the presence of a proton gradient across the membrane. The alpha chain is a regulatory subunit. This is ATP synthase subunit alpha from Clavibacter sepedonicus (Clavibacter michiganensis subsp. sepedonicus).